The sequence spans 65 residues: Large ribosomal subunit protein bL35 (65 aa).

The segment at 1–28 (MPKMKTNRSAAKRFGKTGSGKFTRRRQN) is disordered.

It belongs to the bacterial ribosomal protein bL35 family.

In Solidesulfovibrio magneticus (strain ATCC 700980 / DSM 13731 / RS-1) (Desulfovibrio magneticus), this protein is Large ribosomal subunit protein bL35.